An 893-amino-acid polypeptide reads, in one-letter code: DNA mismatch repair protein MutS (893 aa).

ATP is bound at residue 631–638 (GPNMAGKS). A disordered region spans residues 821-858 (AGRPRVAVRQPQGGRRGASTGQLGLFGMEPAQGGTGVT).

This sequence belongs to the DNA mismatch repair MutS family.

In terms of biological role, this protein is involved in the repair of mismatches in DNA. It is possible that it carries out the mismatch recognition step. This protein has a weak ATPase activity. The chain is DNA mismatch repair protein MutS from Myxococcus xanthus (strain DK1622).